The primary structure comprises 215 residues: Unique short US11 glycoprotein (215 aa).

Residues 1–17 (MNLVMLILALWAPVAGS) constitute a signal peptide (partially cleaved). The Lumenal portion of the chain corresponds to 18–182 (MPELSLTLFD…YYALTIKSAQ (165 aa)). An Ig-like H-type domain is found at 47-146 (YRVEYSEARC…TYYVECEPRC (100 aa)). Residues cysteine 56 and cysteine 142 are joined by a disulfide bond. Asparagine 73 is a glycosylation site (N-linked (GlcNAc...) asparagine; by host). The chain crosses the membrane as a helical span at residues 183 to 203 (YTLMMVAVIQVFWGLYVKGWL). The Cytoplasmic segment spans residues 204 to 215 (HRHFPWMFSDQW).

Belongs to the cytomegalovirus US6 family. In terms of assembly, interacts with host TRAM1. N-glycosylated. Post-translationally, a fraction of newly synthesized molecules retain the signal peptide after the N-linked glycan has been attached and translation of the polypeptide has been completed. Delayed cleavage of the signal peptide is determined by the first four residues, as well as by the transmembrane region.

The protein resides in the host endoplasmic reticulum membrane. In terms of biological role, participates in the inhibition of the host immune response. Redirects newly synthesized major histocompatibility complex (MHC) class I heavy chains via the SEC61 translocon to the cytosol where they undergo proteasome-dependent destruction. In consequence, infected cells are masked for immune recognition by cytotoxic T-lymphocytes. This Human cytomegalovirus (strain AD169) (HHV-5) protein is Unique short US11 glycoprotein (US11).